The sequence spans 400 residues: Nucleoside permease NupC (400 aa).

The Cytoplasmic portion of the chain corresponds to 1-3; it reads MDR. A helical membrane pass occupies residues 4–24; the sequence is VLHFVLALAVVAILALLVSSD. Over 25–36 the chain is Periplasmic; sequence RKKIRIRYVIQL. Residues 37–57 form a helical membrane-spanning segment; sequence LVIEVLLAWFFLNSDVGLGFV. Topologically, residues 58–86 are cytoplasmic; sequence KGFSEMFEKLLGFANEGTNFVFGSMNDQG. Residues 87-107 form a helical membrane-spanning segment; the sequence is LAFFFLKVLCPIVFISALIGI. The Periplasmic portion of the chain corresponds to 108-168; that stretch reads LQHIRVLPVI…GKISRNRMYT (61 aa). A helical transmembrane segment spans residues 169–189; the sequence is MAATAMSTVSMSIVGAYMTML. Residues 190-192 lie on the Cytoplasmic side of the membrane; sequence EPK. The helical transmembrane segment at 193 to 213 threads the bilayer; that stretch reads YVVAALVLNMFSTFIVLSLIN. The Periplasmic segment spans residues 214–250; that stretch reads PYRVDASEENIQMSNLHEGQSFFEMLGEYILAGFKVA. A helical transmembrane segment spans residues 251–271; it reads IIVAAMLIGFIALIAALNALF. At 272-281 the chain is on the cytoplasmic side; it reads ATVTGWFGYS. The chain crosses the membrane as a helical span at residues 282 to 302; the sequence is ISFQGILGYIFYPIAWVMGVP. Residues 303–341 are Periplasmic-facing; it reads SSEALQVGSIMATKLVSNEFVAMMDLQKIASTLSPRAEG. Residues 342–362 traverse the membrane as a helical segment; the sequence is IISVFLVSFANFSSIGIIAGA. Residues 363–378 are Cytoplasmic-facing; that stretch reads VKGLNEEQGNVVSRFG. A helical membrane pass occupies residues 379–399; sequence LKLVYGSTLVSVLSASIAALV. A topological domain (periplasmic) is located at residue L400.

Belongs to the concentrative nucleoside transporter (CNT) (TC 2.A.41) family.

The protein localises to the cell inner membrane. The catalysed reaction is adenosine(in) + H(+)(in) = adenosine(out) + H(+)(out). It catalyses the reaction uridine(in) + H(+)(in) = uridine(out) + H(+)(out). The enzyme catalyses thymidine(in) + H(+)(in) = thymidine(out) + H(+)(out). It carries out the reaction cytidine(in) + H(+)(in) = cytidine(out) + H(+)(out). The catalysed reaction is 2'-deoxycytidine(in) + H(+)(in) = 2'-deoxycytidine(out) + H(+)(out). Its activity is regulated as follows. Transport is inhibited by the proton uncoupler dinitrophenol. Inhibited by the nucleoside antibiotic showdomycin. Functionally, nucleoside transport protein that can transport adenosine, uridine, thymidine, cytidine and deoxycytidine. Shows weak activity with inosine and xanthosine. Transport is driven by a proton motive force. Does not transport guanosine, deoxyguanosine, hypoxanthine or uracil. Also shows activity with the chemotherapeutic drugs 3'-azido-3'-deoxythymidine (AZT), 2',3'- dideoxycytidine (ddC) and 2'-deoxy-2',2'-difluorocytidine (gemcitabine). The chain is Nucleoside permease NupC from Escherichia coli (strain K12).